The following is a 376-amino-acid chain: MSGPLTERRQTILKLVIQEFVDTATPVASETLVRKYRLPVSPATVRNDMAALEELGFLTHPHTSGGRIPTDTGYRFFVENLMERTSLSPAEQRMIRHQFYQVRGELDQWVQLACAVLARTAHNASVATAPRAEQLRFKSLELISIHETMALAVIVFHGGIVKQQTLPVEPWRTPEDLRRAAGLVSDLLADATLTRVEELATAATFNGIPLSDFERGLVDLVVRAMIAFEEQAQEQIYSDGLLEMLSQPEFSPASGRDDAERVIERMRRTLEILKSGRGLGPLIPQALASGGVQVIIGGEHGEDTMRDYSVILARYGVEGVIAGVLGVIGPTRMAYPRSISTVRYIASLMNNLLAELYNVQARPSEGESEYKDEQHA.

The protein belongs to the HrcA family.

Its function is as follows. Negative regulator of class I heat shock genes (grpE-dnaK-dnaJ and groELS operons). Prevents heat-shock induction of these operons. In Chloroflexus aggregans (strain MD-66 / DSM 9485), this protein is Heat-inducible transcription repressor HrcA.